A 121-amino-acid polypeptide reads, in one-letter code: LSM complex subunit lsm4 (121 aa).

The region spanning 2–75 (LPLTLLNATQ…IKYLRIQDEV (74 aa)) is the Sm domain. Positions 82–121 (QQAQQRENRGSRFRGRGQRGRGNYGHTAPNRRGRGRGGHM) are disordered. Over residues 110–121 (PNRRGRGRGGHM) the composition is skewed to basic residues.

The protein belongs to the snRNP Sm proteins family. Component of the heptameric LSM1-LSM7 complex that forms a seven-membered ring structure with a donut shape. The LSm subunits are arranged in the order lsm1, lsm2, lsm3, lsm6, lsm5, lsm7 and lsm4. Component of the heptameric LSM2-LSM8 complex that forms a seven-membered ring structure with a donut shape. The LSm subunits are arranged in the order lsm8, lsm2, lsm3, lsm6, lsm5, lsm7 and lsm4.

Its subcellular location is the nucleus. It localises to the cytoplasm. Component of LSm protein complexes, which are involved in RNA processing and may function in a chaperone-like manner. Component of the cytoplasmic LSM1-LSM7 complex which is involved in mRNA degradation by activating the decapping step. The LSM1-LSM7 complex loads onto the 3'-end of single stranded RNA. Component of the nuclear LSM2-LSM8 complex, which is involved in spliceosome assembly. The LSM2-LSM8 complex plays a role in the biogenesis of the spliceosomal U4/U6-U5 tri-snRNP complex by accelerating prp24-mediated annealing of U4/U6 di-snRNA. The LSM2-LSM8 complex binds U6 snRNA terminating with a cyclic 2',3' phosphate group; RNA with an unmodified 3' hydroxyl or non-cyclic 3' phosphate is bound less tightly. The protein is LSM complex subunit lsm4 (lsm4) of Schizosaccharomyces pombe (strain 972 / ATCC 24843) (Fission yeast).